The chain runs to 720 residues: Long chain acyl-CoA synthetase 8 (720 aa).

Met1 carries the post-translational modification N-acetylmethionine. Residue 279-290 (IMFTSGSTGLPK) participates in ATP binding. The fatty acid-binding stretch occupies residues 554 to 582 (DEKGTRWFYTGDIGRFHPDGCLEVIDRKK).

Belongs to the ATP-dependent AMP-binding enzyme family. It depends on Mg(2+) as a cofactor.

It catalyses the reaction a long-chain fatty acid + ATP + CoA = a long-chain fatty acyl-CoA + AMP + diphosphate. It participates in lipid metabolism; fatty acid metabolism. Its function is as follows. Activation of long-chain fatty acids for both synthesis of cellular lipids, and degradation via beta-oxidation. Preferentially uses palmitate, palmitoleate, oleate and linoleate. This is Long chain acyl-CoA synthetase 8 (LACS8) from Arabidopsis thaliana (Mouse-ear cress).